The following is a 503-amino-acid chain: Protein FAM124A (503 aa).

Residues L434–A470 are disordered. The segment covering Q436–N445 has biased composition (polar residues). Residues S447–S460 show a composition bias toward low complexity.

The protein belongs to the FAM124 family.

In Xenopus tropicalis (Western clawed frog), this protein is Protein FAM124A (fam124a).